Consider the following 396-residue polypeptide: Probable sugar efflux transporter (396 aa).

The next 12 helical transmembrane spans lie at 15–35 (VVTL…PVGL), 50–70 (VGIM…PFML), 81–101 (LICL…SWSF), 103–123 (VLVI…SITA), 136–156 (AQAL…GLPL), 170–190 (FFAI…LLPL), 209–229 (PALM…YTAY), 246–266 (FATA…VIFG), 275–295 (ALVS…LPAA), 299–319 (IHLG…GLGM), 333–353 (VAMA…ALVG), and 364–384 (MIGY…IIIF).

The protein belongs to the major facilitator superfamily. SotB (TC 2.A.1.2) family.

It is found in the cell inner membrane. In terms of biological role, involved in the efflux of sugars. The physiological role may be the reduction of the intracellular concentration of toxic sugars or sugar metabolites. The polypeptide is Probable sugar efflux transporter (Escherichia coli O139:H28 (strain E24377A / ETEC)).